A 308-amino-acid chain; its full sequence is Aldo-keto reductase AKR2E4 (308 aa).

NADP(+) contacts are provided by residues 22–29 and D53; that span reads GTGRGTAK. Y58 (proton donor) is an active-site residue. Residues 158–159, R215, and 259–269 contribute to the NADP(+) site; these read SN and KSTNKQRIAQN.

It belongs to the short-chain dehydrogenases/reductases (SDR) family. As to expression, detected in hemolymph (at protein level). Detected in larval ovary.

Subject to substrate inhibition by high levels of 3-dehydroecdysone. In terms of biological role, NADP-dependent oxidoreductase with high 3-dehydroecdysone reductase activity. May play a role in the regulation of molting. Has lower activity with phenylglyoxal and isatin (in vitro). Has no activity with NADH as cosubstrate. Has no activity with nitrobenzaldehyde and 3-hydroxybenzaldehyde. The chain is Aldo-keto reductase AKR2E4 (akr2e) from Bombyx mori (Silk moth).